The primary structure comprises 239 residues: Small ribosomal subunit protein uS2 (239 aa).

This sequence belongs to the universal ribosomal protein uS2 family.

The protein is Small ribosomal subunit protein uS2 of Francisella tularensis subsp. novicida (strain U112).